The chain runs to 107 residues: Integration host factor subunit beta (107 aa).

Over residues proline 82–glutamate 101 the composition is skewed to basic and acidic residues. A disordered region spans residues proline 82–leucine 107.

This sequence belongs to the bacterial histone-like protein family. In terms of assembly, heterodimer of an alpha and a beta chain.

In terms of biological role, this protein is one of the two subunits of integration host factor, a specific DNA-binding protein that functions in genetic recombination as well as in transcriptional and translational control. This chain is Integration host factor subunit beta, found in Paraburkholderia phytofirmans (strain DSM 17436 / LMG 22146 / PsJN) (Burkholderia phytofirmans).